Here is an 806-residue protein sequence, read N- to C-terminus: Volume-regulated anion channel subunit LRRC8E (806 aa).

Topologically, residues 1 to 22 are cytoplasmic; the sequence is MIPVAEFKQFTEQQPAFKVLKP. A helical transmembrane segment spans residues 23-43; sequence WWDVLAEYITYAMLMIGVFGC. Residues 44–130 are Extracellular-facing; that stretch reads TLQVTQDKII…YETALHWYAK (87 aa). Cysteines 54 and 311 form a disulfide. Residues Asn57 and Asn80 are each glycosylated (N-linked (GlcNAc...) asparagine). Positions 75-104 are disordered; that stretch reads QSSASNDSDLETTVPPPTATSSPPREMSGL. A helical transmembrane segment spans residues 131 to 151; that stretch reads YFPYLVVIHTLIFIICGNFWF. The Cytoplasmic segment spans residues 152-275; that stretch reads KFPGTSSKIE…MRQTVLKVCK (124 aa). The disordered stretch occupies residues 182–217; it reads EVSGESSQEKPNQERSIDRELSKPNFEEGSPATADL. Residues 188-207 show a composition bias toward basic and acidic residues; that stretch reads SQEKPNQERSIDRELSKPNF. The helical transmembrane segment at 276–296 threads the bilayer; that stretch reads FVLITIYNAVLVGKIHFIVPC. The Extracellular portion of the chain corresponds to 297–323; that stretch reads SVHTEDMTGYNSFCCNHTKAHLFSKLA. Residue Asn312 is glycosylated (N-linked (GlcNAc...) asparagine). Residues 324 to 344 traverse the membrane as a helical segment; that stretch reads ISYLCFLGVYGLTCFYTLYWL. Residues 345–806 are Cytoplasmic-facing; sequence FRRPLKEYSF…VDVRDKFKED (462 aa). LRR repeat units follow at residues 569–589, 593–614, 616–637, 641–662, 664–685, 687–708, 710–731, 733–754, and 756–777; these read HLQKFSIHNDGTKLLTLNALK, LVKELELVRCELERIPHAVFSL, NLQVLDLKENTLHTIEEIISLQ, KLSVLRLWHNQIAYIPDHIRKL, GLEELSLNRNKILVIPSQLFLC, KLRHLDLSFNEIRELPPEIGVL, LLQYLGLSGNFLEDLPTELFFC, KLKTLKLGQNRLASLSPKVGSL, and CLVKLELKGNRMDMLPPEIGNC.

Belongs to the LRRC8 family. As to quaternary structure, heterohexamer; oligomerizes with other LRRC8 proteins (lrrc8a, lrrc8c, lrrc8d and/or lrrc8b) to form a heterohexamer. Detected in a channel complex that contains lrrc8a, lrrc8c and lrrc8e. In vivo, the subunit composition may depend primarily on expression levels, and heterooligomeric channels containing various proportions of the different LRRC8 proteins may coexist.

The protein resides in the cell membrane. The protein localises to the endoplasmic reticulum membrane. It is found in the lysosome membrane. It catalyses the reaction chloride(in) = chloride(out). The enzyme catalyses iodide(out) = iodide(in). It carries out the reaction taurine(out) = taurine(in). The catalysed reaction is 2',3'-cGAMP(out) = 2',3'-cGAMP(in). Non-essential component of the volume-regulated anion channel (VRAC, also named VSOAC channel), an anion channel required to maintain a constant cell volume in response to extracellular or intracellular osmotic changes. The VRAC channel conducts iodide better than chloride and can also conduct organic osmolytes like taurine. Mediates efflux of amino acids, such as aspartate, in response to osmotic stress. The VRAC channel also mediates transport of immunoreactive cyclic dinucleotide GMP-AMP (2'-3'-cGAMP), an immune messenger produced in response to DNA virus in the cytosol. Channel activity requires lrrc8a plus at least one other family member (lrrc8b, lrrc8c, lrrc8d or lrrc8e); channel characteristics depend on the precise subunit composition. Also plays a role in lysosome homeostasis by forming functional lysosomal VRAC channels in response to low cytoplasmic ionic strength condition: lysosomal VRAC channels are necessary for the formation of large lysosome-derived vacuoles, which store and then expel excess water to maintain cytosolic water homeostasis. The chain is Volume-regulated anion channel subunit LRRC8E from Xenopus laevis (African clawed frog).